The primary structure comprises 593 residues: ATP-dependent RNA helicase DDX55 (593 aa).

The Q motif motif lies at 9-37; sequence WGSLPVKLHDNILQTLKELGFTYMTPVQS. A Helicase ATP-binding domain is found at 40 to 223; that stretch reads IPLFMSNKDV…RAGLRNPVRI (184 aa). Residue 53–60 participates in ATP binding; that stretch reads AVTGSGKT. The DEAD box signature appears at 171–174; that stretch reads DEAD. Residues 241–405 enclose the Helicase C-terminal domain; that stretch reads KLSNYYTMCR…SVKDVVDVLP (165 aa). The segment covering 524 to 535 has biased composition (basic residues); it reads IKKDRKKKRLPK. Disordered regions lie at residues 524–545 and 569–593; these read IKKD…SDAA and EEDF…SDGD. Residues 531–560 form an important for nuclear localization region; it reads KRLPKAKLDQDSDAAEEDLNELMNDTRLLK. Residues 535–565 are a coiled coil; the sequence is KAKLDQDSDAAEEDLNELMNDTRLLKKLKKG.

Belongs to the DEAD box helicase family. DDX55/SPB4 subfamily. Interacts with 28S rRNA. Interacts with double-stranded RNA substrates in vitro; the interaction stimulates ATPase activity.

The protein resides in the nucleus. It is found in the nucleoplasm. It catalyses the reaction ATP + H2O = ADP + phosphate + H(+). Probable ATP-binding RNA helicase. Plays an essential role in early embryonic development. Has ATPase activity and is involved in the maturation of precursor large subunit rRNAs. The polypeptide is ATP-dependent RNA helicase DDX55 (ddx55) (Danio rerio (Zebrafish)).